Here is a 139-residue protein sequence, read N- to C-terminus: Small ribosomal subunit protein uS12 (139 aa).

It belongs to the universal ribosomal protein uS12 family. As to quaternary structure, part of the 30S ribosomal subunit. Contacts proteins S8 and S17. May interact with IF1 in the 30S initiation complex.

Functionally, with S4 and S5 plays an important role in translational accuracy. Interacts with and stabilizes bases of the 16S rRNA that are involved in tRNA selection in the A site and with the mRNA backbone. Located at the interface of the 30S and 50S subunits, it traverses the body of the 30S subunit contacting proteins on the other side and probably holding the rRNA structure together. The combined cluster of proteins S8, S12 and S17 appears to hold together the shoulder and platform of the 30S subunit. This chain is Small ribosomal subunit protein uS12, found in Mycoplasma pneumoniae (strain ATCC 29342 / M129 / Subtype 1) (Mycoplasmoides pneumoniae).